We begin with the raw amino-acid sequence, 327 residues long: Tetraspanin-4 (327 aa).

Residues M1–N6 lie on the Cytoplasmic side of the membrane. The chain crosses the membrane as a helical span at residues L7–I27. At W28–Q43 the chain is on the extracellular side. N34 carries N-linked (GlcNAc...) asparagine glycosylation. Residues W44 to A64 form a helical membrane-spanning segment. The Cytoplasmic segment spans residues C65–Y75. The helical transmembrane segment at L76 to V96 threads the bilayer. Topologically, residues T97–K235 are extracellular. An N-linked (GlcNAc...) asparagine glycan is attached at N187. The chain crosses the membrane as a helical span at residues V236–A256. Topologically, residues A257–E287 are cytoplasmic. Residues I288–C308 traverse the membrane as a helical segment. At C309–A327 the chain is on the extracellular side.

This sequence belongs to the tetraspanin (TM4SF) family.

Its subcellular location is the membrane. Functionally, may be involved in the regulation of cell differentiation. This is Tetraspanin-4 (TET4) from Arabidopsis thaliana (Mouse-ear cress).